Reading from the N-terminus, the 474-residue chain is tRNA-2-methylthio-N(6)-dimethylallyladenosine synthase (474 aa).

The 118-residue stretch at 3–120 folds into the MTTase N-terminal domain; that stretch reads KKLHIKTWGC…LPEMINHVQG (118 aa). The [4Fe-4S] cluster site is built by cysteine 12, cysteine 49, cysteine 83, cysteine 157, cysteine 161, and cysteine 164. Residues 143-375 enclose the Radical SAM core domain; the sequence is RAEGPTAFVS…QQRISQQAME (233 aa). The 64-residue stretch at 378–441 folds into the TRAM domain; sequence RKMVGTVQRV…ASSLRGILLR (64 aa).

Belongs to the methylthiotransferase family. MiaB subfamily. Monomer. The cofactor is [4Fe-4S] cluster.

It localises to the cytoplasm. The catalysed reaction is N(6)-dimethylallyladenosine(37) in tRNA + (sulfur carrier)-SH + AH2 + 2 S-adenosyl-L-methionine = 2-methylsulfanyl-N(6)-dimethylallyladenosine(37) in tRNA + (sulfur carrier)-H + 5'-deoxyadenosine + L-methionine + A + S-adenosyl-L-homocysteine + 2 H(+). Its function is as follows. Catalyzes the methylthiolation of N6-(dimethylallyl)adenosine (i(6)A), leading to the formation of 2-methylthio-N6-(dimethylallyl)adenosine (ms(2)i(6)A) at position 37 in tRNAs that read codons beginning with uridine. The protein is tRNA-2-methylthio-N(6)-dimethylallyladenosine synthase of Yersinia pestis bv. Antiqua (strain Angola).